Reading from the N-terminus, the 120-residue chain is Chaperonin GroEL (120 aa).

23–27 (DGTTT) serves as a coordination point for ATP.

Belongs to the chaperonin (HSP60) family. In terms of assembly, forms a cylinder of 14 subunits composed of two heptameric rings stacked back-to-back. Interacts with the co-chaperonin GroES.

It localises to the cytoplasm. It catalyses the reaction ATP + H2O + a folded polypeptide = ADP + phosphate + an unfolded polypeptide.. Its function is as follows. Together with its co-chaperonin GroES, plays an essential role in assisting protein folding. The GroEL-GroES system forms a nano-cage that allows encapsulation of the non-native substrate proteins and provides a physical environment optimized to promote and accelerate protein folding. The polypeptide is Chaperonin GroEL (Mycolicibacterium pulveris (Mycobacterium pulveris)).